The following is a 303-amino-acid chain: MTRTDQDSWDLASSVGATATMVAAARALASTGERPIINDPFAAPLVRAVGLDFFRRLVDGEVAPADPQRGERDLQLETDSIAVRTRFFDDFFTGAARDGIRQSVILAAGLDARAYRLDWPAGAVVYEVDQPKVVEFKTNTMAALDARPAAQLRTVSIDLREDWPEALRANGFDVTQATSWSAEGLLMYLPPEAQDRLFDNITALSAPGSRLATEYHPDATGTTMAQRAQEFNDRWARVGCDIDLSGLFFDGERSNVVEYLTGRGWRVSARPRRDLFDDYGLAYPEDDETAQFPNIVAVSAELG.

S-adenosyl-L-methionine is bound by residues Asp-129 and 158–159 (DL).

It belongs to the UPF0677 family.

In terms of biological role, exhibits S-adenosyl-L-methionine-dependent methyltransferase activity. This chain is Putative S-adenosyl-L-methionine-dependent methyltransferase MAV_4435, found in Mycobacterium avium (strain 104).